A 178-amino-acid polypeptide reads, in one-letter code: PEST proteolytic signal-containing nuclear protein (178 aa).

The span at 1–15 (MADGKAGDEKPEKSQ) shows a compositional bias: basic and acidic residues. Positions 1 to 82 (MADGKAGDEK…FAIGSQTTKK (82 aa)) are disordered. A2 bears the N-acetylalanine mark. A compositionally biased stretch (low complexity) spans 37–47 (SSSNGGESSSR). At S53 the chain carries Phosphoserine. Residue K64 is modified to N6-acetyllysine. Phosphoserine is present on residues S77, S87, and S119. The disordered stretch occupies residues 134–178 (NIGRDTPTSAGPNSFNKGKHGFSDNQKLWERNIKSHLGNVHDQDN). Phosphothreonine is present on T139. The segment covering 139–149 (TPTSAGPNSFN) has biased composition (polar residues). Position 147 is a phosphoserine (S147). 2 positions are modified to N6-acetyllysine: K150 and K152. Residues 160-178 (KLWERNIKSHLGNVHDQDN) show a composition bias toward basic and acidic residues.

In terms of assembly, interacts with UHRF2/NIRF. In terms of processing, ubiquitinated; mediated by UHRF2 and leading to its subsequent proteasomal degradation. Post-translationally, N-terminally acetylated in a HYPK-dependent manner by the NatA acetyltransferase complex which is composed of NAA10 and NAA15.

The protein localises to the nucleus. May be involved in cell cycle regulation. This is PEST proteolytic signal-containing nuclear protein (PCNP) from Homo sapiens (Human).